The sequence spans 239 residues: Phosphoribosylaminoimidazole-succinocarboxamide synthase (239 aa).

This sequence belongs to the SAICAR synthetase family.

The catalysed reaction is 5-amino-1-(5-phospho-D-ribosyl)imidazole-4-carboxylate + L-aspartate + ATP = (2S)-2-[5-amino-1-(5-phospho-beta-D-ribosyl)imidazole-4-carboxamido]succinate + ADP + phosphate + 2 H(+). The protein operates within purine metabolism; IMP biosynthesis via de novo pathway; 5-amino-1-(5-phospho-D-ribosyl)imidazole-4-carboxamide from 5-amino-1-(5-phospho-D-ribosyl)imidazole-4-carboxylate: step 1/2. In Bacillus cereus (strain 03BB102), this protein is Phosphoribosylaminoimidazole-succinocarboxamide synthase.